A 376-amino-acid polypeptide reads, in one-letter code: Homocitrate synthase (376 aa).

Positions 4 to 259 constitute a Pyruvate carboxyltransferase domain; it reads WKIIDSTLRE…RRKYKLEMLP (256 aa). A 2-oxoglutarate-binding site is contributed by Arg-12. Residue Glu-13 participates in Mg(2+) binding. His-72 serves as a coordination point for 2-oxoglutarate. Residue Asp-92 participates in L-lysine binding. Residue Arg-133 coordinates 2-oxoglutarate. Residues Ser-135 and Thr-166 each coordinate L-lysine. Position 166 (Thr-166) interacts with 2-oxoglutarate. Mg(2+) contacts are provided by His-195 and His-197. Catalysis depends on His-292, which acts as the Proton acceptor.

Belongs to the alpha-IPM synthase/homocitrate synthase family. Homocitrate synthase LYS20/LYS21 subfamily. In terms of assembly, exists in an equilibrium between monomer and homodimer. The cofactor is Mg(2+). Mn(2+) serves as cofactor.

Its subcellular location is the cytoplasm. It catalyses the reaction acetyl-CoA + 2-oxoglutarate + H2O = (2R)-homocitrate + CoA + H(+). The catalysed reaction is oxaloacetate + acetyl-CoA + H2O = citrate + CoA + H(+). It participates in amino-acid biosynthesis; L-lysine biosynthesis via AAA pathway; L-alpha-aminoadipate from 2-oxoglutarate: step 1/5. With respect to regulation, is highly and competitively inhibited by lysine that binds to the active site and competes with 2-oxoglutarate. Is also slightly inhibited by arginine and 2-aminoethylcysteine. Its function is as follows. Catalyzes the aldol-type condensation of 2-oxoglutarate with acetyl-CoA to yield homocitrate. Carries out the first step of the alpha-aminoadipate (AAA) lysine biosynthesis pathway. To a lesser extent, can also use oxaloacetate in place of 2-oxoglutarate, leading to citrate. Does not display 2-isopropylmalate synthase activity since it cannot use 2-oxoisovalerate. The protein is Homocitrate synthase of Thermus thermophilus (strain ATCC BAA-163 / DSM 7039 / HB27).